We begin with the raw amino-acid sequence, 833 residues long: Leucine--tRNA ligase (833 aa).

Positions 41–52 match the 'HIGH' region motif; the sequence is PYPSGAGLHVGH. Positions 610–614 match the 'KMSKS' region motif; sequence KMSKS. K613 provides a ligand contact to ATP.

Belongs to the class-I aminoacyl-tRNA synthetase family.

The protein localises to the cytoplasm. The catalysed reaction is tRNA(Leu) + L-leucine + ATP = L-leucyl-tRNA(Leu) + AMP + diphosphate. This Streptococcus pneumoniae serotype 19F (strain G54) protein is Leucine--tRNA ligase.